The following is a 561-amino-acid chain: MTRNQLHNWLNAGFFGLLLLLIHVQGQDSPEANPIRNTHTGQIQGSLIHVKDTKAGVHTFLGIPFAKPPVGPLRFAPPEAPEPWSGVRDGTAHPAMCLQNLDMLNEAGLPDMKMMLSSFPMSEDCLYLNIYTPAHAHEGSNLPVMVWIHGGALVIGMASMFDGSLLTVNEDLVVVTIQYRLGVLGFFSTGDQHARGNWGYLDQAAALRWVQQNIAHFGGNPDRVTIFGESAGGTSVSSHVVSPMSQGLFHGAIMESGVALLPDLISETSEMVSTTVAKLSGCEAMDSQALVRCLRGKSEAEILAINKVFKMIPAVVDGEFFPRHPKELLASEDFHPVPSIIGVNNDEFGWSIPVVMGSAQMIKGITRENLQAVLKDTAVQMMLPPECSDLLMEEYMGDTEDAQTLQIQFTEMMGDFMFVIPALQVAHFQRSHAPVYFYEFQHPPSYFKDVRPPHVKADHADEIPFVFASFFWGMKLDFTEEEELLSRRMMKYWANFARHGNPNSEGLPYWPVMDHDEQYLQLDIQPAVGRALKAGRLQFWTKTLPQKIQELKASQDKHREL.

The first 26 residues, 1–26 (MTRNQLHNWLNAGFFGLLLLLIHVQG), serve as a signal peptide directing secretion. Cysteine 97 and cysteine 125 are disulfide-bonded. Serine 230 serves as the catalytic Acyl-ester intermediate. An intrachain disulfide couples cysteine 282 to cysteine 293. Catalysis depends on charge relay system residues glutamate 347 and histidine 459. The Prevents secretion from ER motif lies at 558 to 561 (HREL).

It belongs to the type-B carboxylesterase/lipase family. In terms of tissue distribution, detected in liver (at protein level).

Its subcellular location is the microsome. The protein resides in the endoplasmic reticulum. It carries out the reaction an O-acyl-(R)-carnitine + H2O = (R)-carnitine + a fatty acid + H(+). It catalyses the reaction all-trans-retinyl hexadecanoate + H2O = all-trans-retinol + hexadecanoate + H(+). Hydrolase with high activity towards palmitoylcarnitine. Is also active with p-nitrophenylacetate and alpha-naphthylacetate. May also hydrolyze retinyl esters. The polypeptide is Acylcarnitine hydrolase (Mus musculus (Mouse)).